We begin with the raw amino-acid sequence, 145 residues long: Male-specific protein scotti (145 aa).

Positions 1–34 (MANNRLMPEGQIIEEDMDGEDQNARELDIDDDDD) are disordered. Over residues 12–21 (IIEEDMDGED) the composition is skewed to acidic residues.

Belongs to the male-specific scotti family.

Its function is as follows. Post-meiotically transcribed gene that has a role in late spermiogenesis; required for actin cone progression during spermatid individualization. The chain is Male-specific protein scotti from Drosophila willistoni (Fruit fly).